The chain runs to 318 residues: tRNA dimethylallyltransferase (318 aa).

21-28 (GPTATGKS) lines the ATP pocket. Residue 23-28 (TATGKS) coordinates substrate. The tract at residues 46 to 49 (DSMQ) is interaction with substrate tRNA.

Belongs to the IPP transferase family. In terms of assembly, monomer. The cofactor is Mg(2+).

It catalyses the reaction adenosine(37) in tRNA + dimethylallyl diphosphate = N(6)-dimethylallyladenosine(37) in tRNA + diphosphate. Functionally, catalyzes the transfer of a dimethylallyl group onto the adenine at position 37 in tRNAs that read codons beginning with uridine, leading to the formation of N6-(dimethylallyl)adenosine (i(6)A). The polypeptide is tRNA dimethylallyltransferase (Acidothermus cellulolyticus (strain ATCC 43068 / DSM 8971 / 11B)).